The following is a 260-amino-acid chain: Purine nucleoside phosphorylase PD_1754 (260 aa).

Zn(2+) contacts are provided by His-79, Cys-120, and His-137.

It belongs to the purine nucleoside phosphorylase YfiH/LACC1 family. As to quaternary structure, homodimer. Requires Cu(2+) as cofactor. It depends on Zn(2+) as a cofactor.

The catalysed reaction is adenosine + phosphate = alpha-D-ribose 1-phosphate + adenine. The enzyme catalyses S-methyl-5'-thioadenosine + phosphate = 5-(methylsulfanyl)-alpha-D-ribose 1-phosphate + adenine. It catalyses the reaction inosine + phosphate = alpha-D-ribose 1-phosphate + hypoxanthine. It carries out the reaction adenosine + H2O + H(+) = inosine + NH4(+). Purine nucleoside enzyme that catalyzes the phosphorolysis of adenosine and inosine nucleosides, yielding D-ribose 1-phosphate and the respective free bases, adenine and hypoxanthine. Also catalyzes the phosphorolysis of S-methyl-5'-thioadenosine into adenine and S-methyl-5-thio-alpha-D-ribose 1-phosphate. Also has adenosine deaminase activity. In Xylella fastidiosa (strain Temecula1 / ATCC 700964), this protein is Purine nucleoside phosphorylase PD_1754.